The following is a 594-amino-acid chain: Ferredoxin--nitrite reductase, chloroplastic (594 aa).

The N-terminal 32 residues, 1–32 (MASLPVNKIIPSSTTLLSSSNNNRRRNNSSIR), are a transit peptide targeting the chloroplast. Residues 13 to 22 (STTLLSSSNN) show a composition bias toward low complexity. The interval 13–36 (STTLLSSSNNNRRRNNSSIRCQKA) is disordered. Residues cysteine 473, cysteine 479, cysteine 514, and cysteine 518 each contribute to the [4Fe-4S] cluster site. A siroheme-binding site is contributed by cysteine 518.

This sequence belongs to the nitrite and sulfite reductase 4Fe-4S domain family. In terms of assembly, monomer. Requires siroheme as cofactor. The cofactor is [4Fe-4S] cluster.

The protein localises to the plastid. It localises to the chloroplast. The enzyme catalyses 6 oxidized [2Fe-2S]-[ferredoxin] + NH4(+) + 2 H2O = nitrite + 6 reduced [2Fe-2S]-[ferredoxin] + 8 H(+). The protein operates within nitrogen metabolism; nitrate reduction (assimilation). The chain is Ferredoxin--nitrite reductase, chloroplastic (NIR) from Spinacia oleracea (Spinach).